The sequence spans 421 residues: E3 ubiquitin-protein ligase RMD5 (421 aa).

A CTLH domain is found at 176 to 236 (EFIEMGQIVH…QIVKHGNPVE (61 aa)). Residues 361-404 (CPVLKEETTTENPPYSLACHHIISKKALDRLSKNGTITFKCPYC) form an RING-Gid-type zinc finger.

It belongs to the RMD5/GID2 family. Identified in the GID/CTLH complex. In the absence of stress, the complex exists as an inactive anticipatory complex (GID(Ant)), composed of VID30/GID1, the E3 ubiquitin-ligase RMD5/GID2, VID28/GID5, GID8, and the RING-like subunit FYV10/GID9, awaiting a substrate receptor to form the active E3 ligase complex. When cells are shifted to glucose-containing medium, the substrate receptor VID24/GID4 is induced and becomes part of the complex, named GID(SR4). Additionally, GID7 transforms the GID(SR4) E3 ligase core into a higher-order supramolecular assembly (Chelator-GID(SR4)) specifically tailored for FBP1 ubiquitination. Under osmotic or heat stress, the substrate receptor GID10 is induced and becomes part of the complex, named GID(SR10). Within the GID complex, interacts directly with GID8, FYV10/GID9 and VID28/GID5.

The protein localises to the cytoplasm. The enzyme catalyses S-ubiquitinyl-[E2 ubiquitin-conjugating enzyme]-L-cysteine + [acceptor protein]-L-lysine = [E2 ubiquitin-conjugating enzyme]-L-cysteine + N(6)-ubiquitinyl-[acceptor protein]-L-lysine.. Its pathway is protein modification; protein ubiquitination. Its function is as follows. E3 ubiquitin-protein ligase component of the GID E3 ligase complex recruiting N termini and catalyzing ubiquitination of proteins targeted for degradation. GID E3 is regulated through assembly with interchangeable N-degron-binding substrate receptors induced by distinct environmental perturbations. Required for the adaptation to the presence of glucose in the growth medium; mediates in association with the substrate receptor VID24/GID4 the degradation of enzymes involved in gluconeogenesis when cells are shifted to glucose-containing medium. Required for proteasome-dependent catabolite degradation of fructose-1,6-bisphosphatase (FBP1), malate dehydrogenase (MDH2), and other gluconeogenic enzymes. The chain is E3 ubiquitin-protein ligase RMD5 from Saccharomyces cerevisiae (strain ATCC 204508 / S288c) (Baker's yeast).